We begin with the raw amino-acid sequence, 149 residues long: UPAR/Ly6 domain-containing protein bou (149 aa).

An N-terminal signal peptide occupies residues Met-1 to Gly-31. The Extracellular portion of the chain corresponds to Ile-32–Ala-126. Intrachain disulfides connect Cys-34-Cys-74, Cys-37-Cys-48, Cys-65-Cys-91, Cys-100-Cys-115, and Cys-119-Cys-124. N-linked (GlcNAc...) asparagine glycosylation is present at Asn-64. Asn-125 is lipidated: GPI-anchor amidated asparagine. The propeptide at Ala-126–His-149 is removed in mature form. Residues Ala-127 to Leu-147 form a helical membrane-spanning segment. Residues Arg-148–His-149 are Cytoplasmic-facing.

Post-translationally, GPI-anchored.

The protein resides in the cell membrane. The protein localises to the cell junction. It is found in the septate junction. Its subcellular location is the cytoplasm. It localises to the cell cortex. The protein resides in the secreted. The protein localises to the apicolateral cell membrane. Its function is as follows. Involved in tracheal paracellular barrier functions mediated by epithelial cell septate junctions. Involved in paracellular barrier functions mediated by glial cell septate junctions in the peripheral nervous system, including the chordotonal organs, but not the hemolymph-brain barrier (the insect blood-brain barrier) of the central nervous system. Required for septate junction assembly, possibly by organizing the preassembly and transport of septate junction proteins such as dlg1/disks large 1, Nrx-IV/Neurexin-IV and the claudin protein kune. Involved in chitin fiber organization during tracheal development. Secreted, possibly in association with extracellular vesicles, to act non-autonomously on tissues distant from its site of expression. In Drosophila melanogaster (Fruit fly), this protein is UPAR/Ly6 domain-containing protein bou.